The chain runs to 363 residues: Membrane-bound lytic murein transglycosylase C (363 aa).

Residues 1–15 (MKKYIVFAIIPFLFA) form the signal peptide. Cysteine 16 carries N-palmitoyl cysteine lipidation. Cysteine 16 carries the S-diacylglycerol cysteine lipid modification.

The protein belongs to the transglycosylase Slt family.

It is found in the cell outer membrane. It catalyses the reaction Exolytic cleavage of the (1-&gt;4)-beta-glycosidic linkage between N-acetylmuramic acid (MurNAc) and N-acetylglucosamine (GlcNAc) residues in peptidoglycan, from either the reducing or the non-reducing ends of the peptidoglycan chains, with concomitant formation of a 1,6-anhydrobond in the MurNAc residue.. In terms of biological role, murein-degrading enzyme. May play a role in recycling of muropeptides during cell elongation and/or cell division. This chain is Membrane-bound lytic murein transglycosylase C, found in Histophilus somni (strain 129Pt) (Haemophilus somnus).